Reading from the N-terminus, the 188-residue chain is Protein GrpE (188 aa).

The protein belongs to the GrpE family. As to quaternary structure, homodimer.

It localises to the cytoplasm. In terms of biological role, participates actively in the response to hyperosmotic and heat shock by preventing the aggregation of stress-denatured proteins, in association with DnaK and GrpE. It is the nucleotide exchange factor for DnaK and may function as a thermosensor. Unfolded proteins bind initially to DnaJ; upon interaction with the DnaJ-bound protein, DnaK hydrolyzes its bound ATP, resulting in the formation of a stable complex. GrpE releases ADP from DnaK; ATP binding to DnaK triggers the release of the substrate protein, thus completing the reaction cycle. Several rounds of ATP-dependent interactions between DnaJ, DnaK and GrpE are required for fully efficient folding. The chain is Protein GrpE from Chromobacterium violaceum (strain ATCC 12472 / DSM 30191 / JCM 1249 / CCUG 213 / NBRC 12614 / NCIMB 9131 / NCTC 9757 / MK).